Consider the following 485-residue polypeptide: Elongation factor TuB, chloroplastic (485 aa).

A chloroplast-targeting transit peptide spans 1-76 (MASISAASAT…TTHPRRFTVR (76 aa)). The region spanning 86-290 (KPHVNIGTIG…NVDEYIPIPQ (205 aa)) is the tr-type G domain. The interval 95–102 (GHVDHGKT) is G1. 95–102 (GHVDHGKT) contributes to the GTP binding site. The interval 136-140 (GITIN) is G2. Residues 157–160 (DCPG) are G3. Residues 157–161 (DCPGH) and 212–215 (NKQD) each bind GTP. The interval 212 to 215 (NKQD) is G4. A G5 region spans residues 250-252 (SAL).

The protein belongs to the TRAFAC class translation factor GTPase superfamily. Classic translation factor GTPase family. EF-Tu/EF-1A subfamily.

Its subcellular location is the plastid. It is found in the chloroplast. Functionally, this protein promotes the GTP-dependent binding of aminoacyl-tRNA to the A-site of ribosomes during protein biosynthesis. This chain is Elongation factor TuB, chloroplastic (TUFB), found in Nicotiana sylvestris (Wood tobacco).